A 295-amino-acid polypeptide reads, in one-letter code: Ribosomal protein L11 methyltransferase (295 aa).

Residues Thr-138, Gly-161, Asp-183, and Asn-230 each contribute to the S-adenosyl-L-methionine site.

It belongs to the methyltransferase superfamily. PrmA family.

The protein resides in the cytoplasm. It catalyses the reaction L-lysyl-[protein] + 3 S-adenosyl-L-methionine = N(6),N(6),N(6)-trimethyl-L-lysyl-[protein] + 3 S-adenosyl-L-homocysteine + 3 H(+). Functionally, methylates ribosomal protein L11. This Rhodopseudomonas palustris (strain BisB5) protein is Ribosomal protein L11 methyltransferase.